A 180-amino-acid chain; its full sequence is MSRIGRLPIPVPKGVSVEVAPGRVKVKGPKGELEVPVSPEMRVVVEEGVVRVERPSDERRHKSLHGLTRTLIANAVKGVSEGYSKELLIKGIGYRARLVGRALELTVGFSHPVVVEPPEGITFEVPEPTRVRVSGIDKQKVGQVAANIRAIRKPSAYHEKGIYYAGEPVRLKPGKAGAKK.

Belongs to the universal ribosomal protein uL6 family. In terms of assembly, part of the 50S ribosomal subunit.

This protein binds to the 23S rRNA, and is important in its secondary structure. It is located near the subunit interface in the base of the L7/L12 stalk, and near the tRNA binding site of the peptidyltransferase center. The sequence is that of Large ribosomal subunit protein uL6 from Thermus thermophilus (strain ATCC BAA-163 / DSM 7039 / HB27).